A 571-amino-acid polypeptide reads, in one-letter code: Double-stranded RNA-binding protein Staufen homolog 2 (571 aa).

The DRBM 1 domain occupies 8 to 75 (TPMCLVNELA…ANKALTESTL (68 aa)). Residues Pro9 and Val13 each carry the phosphoserine modification. Arg18 is subject to Phosphothreonine. Ser21 carries the phosphoserine modification. Disordered regions lie at residues 71-94 (TESTLPKPVQKPPKSNVNNNPGSI) and 178-203 (ALQNEPIPEKSPQNGESGKEMDDDKD). Polar residues predominate over residues 83 to 94 (PKSNVNNNPGSI). Residues 95–181 (TPTVELNGLA…AMKALQALQN (87 aa)) form the DRBM 2 domain. A Phosphoserine modification is found at Ser188. Residues 194–203 (SGKEMDDDKD) show a composition bias toward basic and acidic residues. DRBM domains are found at residues 207-274 (SEIS…ELKK) and 307-375 (NPIS…QLGY). Short sequence motifs (nuclear localization signal) lie at residues 273–317 (KKLP…QIQQ) and 373–412 (LGYKASTSLQDQLDKTGENKGWSGPKPGFPEPANNTPKGI). The required for dendritic transport stretch occupies residues 381-571 (LQDQLDKTGE…QDCKKSKSVI (191 aa)). The disordered stretch occupies residues 382–413 (QDQLDKTGENKGWSGPKPGFPEPANNTPKGIL). 6 positions are modified to phosphoserine: Ser395, Ser416, Ser426, Ser440, Ser456, and Ser493. The interval 546–571 (LREKADNNQANPGSITQDCKKSKSVI) is disordered. Polar residues predominate over residues 552 to 562 (NNQANPGSITQ).

In terms of assembly, identified in a mRNP complex, at least composed of DHX9, DDX3X, ELAVL1, HNRNPU, IGF2BP1, ILF3, PABPC1, PCBP2, PTBP2, STAU1, STAU2, SYNCRIP and YBX1. Interacts with the exportin XPO5. This requires RNA and RAN bound to GTP. Interacts with microtubules. Isoform 2 and isoform 3 may also interact with ribosomes, and this association is independent of translation. Interacts with TRIM71 (via NHL repeats) in an RNA-dependent manner. Expressed in both somata and dendrites of hippocampal neurons.

The protein localises to the nucleus. Its subcellular location is the nucleolus. It localises to the cytoplasm. It is found in the endoplasmic reticulum. In terms of biological role, RNA-binding protein required for the microtubule-dependent transport of neuronal RNA from the cell body to the dendrite. As protein synthesis occurs within the dendrite, the localization of specific mRNAs to dendrites may be a prerequisite for neurite outgrowth and plasticity at sites distant from the cell body. The chain is Double-stranded RNA-binding protein Staufen homolog 2 (Stau2) from Rattus norvegicus (Rat).